The primary structure comprises 545 residues: Thermosome subunit (545 aa).

Belongs to the TCP-1 chaperonin family. As to quaternary structure, forms an oligomeric complex of eight-membered rings.

In terms of biological role, molecular chaperone; binds unfolded polypeptides in vitro, and has a weak ATPase activity. In Desulfurococcus sp. (strain SY), this protein is Thermosome subunit (ths).